Consider the following 878-residue polypeptide: Splicing factor 3B subunit 2 (878 aa).

The segment covering Met-1 to Lys-10 has biased composition (basic and acidic residues). Disordered regions lie at residues Met-1 to Gly-25 and Arg-67 to Gly-136. A Glycyl lysine isopeptide (Lys-Gly) (interchain with G-Cter in SUMO2) cross-link involves residue Lys-10. Residues Tyr-24 to Thr-58 enclose the SAP domain. Composition is skewed to pro residues over residues Pro-91 to Gly-114 and Ala-122 to Leu-133. The stretch at Ala-140–Gln-177 forms a coiled coil. 2 disordered regions span residues Gly-183–Thr-356 and Lys-383–Lys-436. A compositionally biased stretch (low complexity) spans Pro-201 to Pro-221. 3 positions are modified to omega-N-methylarginine: Arg-205, Arg-228, and Arg-230. Residues Ala-224–Gly-237 show a composition bias toward pro residues. Lys-258 bears the N6-acetyllysine mark. Basic and acidic residues predominate over residues Leu-260–Glu-269. Residue Lys-263 forms a Glycyl lysine isopeptide (Lys-Gly) (interchain with G-Cter in SUMO2) linkage. A Phosphoserine modification is found at Ser-272. Position 281 is a phosphothreonine (Thr-281). A phosphoserine mark is found at Ser-290 and Ser-292. A Phosphothreonine modification is found at Thr-294. Ser-300 carries the phosphoserine modification. Positions Glu-305–Arg-321 are enriched in basic residues. Positions Ser-330–Gly-342 are enriched in basic and acidic residues. At Ser-343 the chain carries Phosphoserine. Residues Lys-383 and Lys-395 each participate in a glycyl lysine isopeptide (Lys-Gly) (interchain with G-Cter in SUMO2) cross-link. 2 stretches are compositionally biased toward basic and acidic residues: residues Lys-383–Glu-397 and Lys-405–Ser-414. The segment at Lys-384–Lys-533 is required for interaction with PRMT9. Residues Ser-414, Ser-418, and Ser-419 each carry the phosphoserine modification. A Glycyl lysine isopeptide (Lys-Gly) (interchain with G-Cter in SUMO2) cross-link involves residue Lys-475. An omega-N-methylarginine mark is found at Arg-491 and Arg-498. A Symmetric dimethylarginine modification is found at Arg-491. Lys-526 is covalently cross-linked (Glycyl lysine isopeptide (Lys-Gly) (interchain with G-Cter in SUMO2)). The disordered stretch occupies residues Ala-674–Gly-740. Residues Glu-695–Pro-715 show a composition bias toward acidic residues. A Glycyl lysine isopeptide (Lys-Gly) (interchain with G-Cter in SUMO2) cross-link involves residue Lys-753. Phosphothreonine is present on Thr-763. Residues Lys-773, Lys-826, and Lys-840 each participate in a glycyl lysine isopeptide (Lys-Gly) (interchain with G-Cter in SUMO2) cross-link. Residues Tyr-827–Ala-852 show a composition bias toward basic and acidic residues. Residues Tyr-827–Phe-878 are disordered. At Ser-844 the chain carries Phosphoserine.

In terms of assembly, component of the 17S U2 SnRNP complex, a ribonucleoprotein complex that contains small nuclear RNA (snRNA) U2 and a number of specific proteins. Part of the SF3B subcomplex of the 17S U2 SnRNP complex. SF3B associates with the splicing subcomplex SF3A and a 12S RNA unit to form the U2 small nuclear ribonucleoproteins complex (U2 snRNP). Within the SF3B complex, interacts directly with SF3B4. Found in a complex with PRMT9, SF3B2 and SF3B4. Interacts (Arg-491-methylated form) with SMN1 (via Tudor domain). Interacts with RBM7. Interacts with ERCC6. Component of the minor spliceosome. Within this complex, interacts with SCNM1 and CRIPT. Methylation at Arg-491 by PRMT9 is required for the interaction with SMN1.

It is found in the nucleus. Its subcellular location is the nucleus speckle. Functionally, component of the 17S U2 SnRNP complex of the spliceosome, a large ribonucleoprotein complex that removes introns from transcribed pre-mRNAs. The 17S U2 SnRNP complex (1) directly participates in early spliceosome assembly and (2) mediates recognition of the intron branch site during pre-mRNA splicing by promoting the selection of the pre-mRNA branch-site adenosine, the nucleophile for the first step of splicing. Within the 17S U2 SnRNP complex, SF3B2 is part of the SF3B subcomplex, which is required for 'A' complex assembly formed by the stable binding of U2 snRNP to the branchpoint sequence in pre-mRNA. Sequence independent binding of SF3A and SF3B subcomplexes upstream of the branch site is essential, it may anchor U2 snRNP to the pre-mRNA. May also be involved in the assembly of the 'E' complex. Also acts as a component of the minor spliceosome, which is involved in the splicing of U12-type introns in pre-mRNAs. The sequence is that of Splicing factor 3B subunit 2 from Mus musculus (Mouse).